A 211-amino-acid polypeptide reads, in one-letter code: SAGA-associated factor 11 homolog 2 (211 aa).

The SGF11-type zinc finger occupies Cys115–Cys136. A disordered region spans residues Arg149–Phe211. The segment covering Ser157–Thr166 has biased composition (low complexity). Ser187 carries the phosphoserine modification. Positions Ser197 to Phe211 are enriched in low complexity.

This sequence belongs to the SGF11 family. Component of some SAGA transcription coactivator-HAT complexes, at least composed of Ada2b, not/nonstop, Pcaf/Gcn5, Sgf11 and Spt3. Within the SAGA complex, Sgf11, e(y)2, and not/nonstop form an additional subcomplex of SAGA called the DUB module (deubiquitination module). Interacts directly with not/nonstop. Interacts with the AMEX complex component xmas-2. Interacts with Cbp80; important for promoter recruitment of Sgf11 that is not associated with the DUB module.

The protein resides in the nucleus. It localises to the nucleoplasm. It is found in the cytoplasm. Its function is as follows. Component of the transcription regulatory histone acetylation (HAT) complex SAGA, a multiprotein complex that activates transcription by remodeling chromatin and mediating histone acetylation and deubiquitination. Within the SAGA complex, participates in a subcomplex that specifically deubiquitinates histone H2B. The SAGA complex is recruited to specific gene promoters by activators, where it is required for transcription. Required for nuclear receptor-mediated transactivation. Binds independently on SAGA to promoters in an RNA-dependent manner. Binds to mRNA and is essential for total mRNA export from the nucleus. Required to counteract heterochromatin silencing. Controls the development of neuronal connectivity in visual system by being required for accurate axon targeting in the optic lobe. Required for expression of ecdysone-induced genes such as br/broad. In Drosophila grimshawi (Hawaiian fruit fly), this protein is SAGA-associated factor 11 homolog 2.